A 306-amino-acid chain; its full sequence is MATH domain and coiled-coil domain-containing protein At3g29580 (306 aa).

Positions 6–132 constitute an MATH domain; it reads DNKFTWVIKN…NGEIKIVVEF (127 aa). A coiled-coil region spans residues 253 to 298; it reads FKLDWLEKKLNEVLEKKEKEESYETRMREIEEEMKDLKAKALDVGA.

This chain is MATH domain and coiled-coil domain-containing protein At3g29580, found in Arabidopsis thaliana (Mouse-ear cress).